The chain runs to 550 residues: Silent protein UshA(0) (550 aa).

An N-terminal signal peptide occupies residues 1 to 25 (MKFLKRGVALALLAAFALTTQPAQA). The a divalent metal cation site is built by Asp-41, His-43, Asp-84, Asn-116, His-217, His-252, and Gln-254. The cysteines at positions 258 and 275 are disulfide-linked. Residues Phe-429 and 498–504 (FNATGGD) each bind substrate.

The protein belongs to the 5'-nucleotidase family. It depends on a divalent metal cation as a cofactor.

Its subcellular location is the periplasm. The sequence is that of Silent protein UshA(0) (ushA) from Salmonella typhimurium (strain LT2 / SGSC1412 / ATCC 700720).